Reading from the N-terminus, the 310-residue chain is Methionyl-tRNA formyltransferase (310 aa).

114-117 contributes to the (6S)-5,6,7,8-tetrahydrofolate binding site; that stretch reads SLLP.

This sequence belongs to the Fmt family.

It catalyses the reaction L-methionyl-tRNA(fMet) + (6R)-10-formyltetrahydrofolate = N-formyl-L-methionyl-tRNA(fMet) + (6S)-5,6,7,8-tetrahydrofolate + H(+). Functionally, attaches a formyl group to the free amino group of methionyl-tRNA(fMet). The formyl group appears to play a dual role in the initiator identity of N-formylmethionyl-tRNA by promoting its recognition by IF2 and preventing the misappropriation of this tRNA by the elongation apparatus. The chain is Methionyl-tRNA formyltransferase from Granulibacter bethesdensis (strain ATCC BAA-1260 / CGDNIH1).